The primary structure comprises 324 residues: Glyoxylate/hydroxypyruvate reductase B (324 aa).

Catalysis depends on residues R237 and E266. H285 (proton donor) is an active-site residue.

Belongs to the D-isomer specific 2-hydroxyacid dehydrogenase family. GhrB subfamily. As to quaternary structure, homodimer.

Its subcellular location is the cytoplasm. It catalyses the reaction glycolate + NADP(+) = glyoxylate + NADPH + H(+). The enzyme catalyses (R)-glycerate + NAD(+) = 3-hydroxypyruvate + NADH + H(+). It carries out the reaction (R)-glycerate + NADP(+) = 3-hydroxypyruvate + NADPH + H(+). Its function is as follows. Catalyzes the NADPH-dependent reduction of glyoxylate and hydroxypyruvate into glycolate and glycerate, respectively. The chain is Glyoxylate/hydroxypyruvate reductase B from Salmonella paratyphi A (strain ATCC 9150 / SARB42).